An 88-amino-acid chain; its full sequence is Small ribosomal subunit protein uS19 (88 aa).

The protein belongs to the universal ribosomal protein uS19 family.

In terms of biological role, protein S19 forms a complex with S13 that binds strongly to the 16S ribosomal RNA. The sequence is that of Small ribosomal subunit protein uS19 from Chlamydia caviae (strain ATCC VR-813 / DSM 19441 / 03DC25 / GPIC) (Chlamydophila caviae).